We begin with the raw amino-acid sequence, 402 residues long: Putative RNA-guided DNA endonuclease (402 aa).

D188 is a catalytic residue. The segment at 202–239 is disordered; sequence KITNPKHERRDRARLAKAQRDVSRKAKGSANRKKARRK. Basic and acidic residues predominate over residues 204-225; it reads TNPKHERRDRARLAKAQRDVSR. Residues 226–239 are compositionally biased toward basic residues; that stretch reads KAKGSANRKKARRK. The active site involves E272. The Zn(2+) site is built by C325, C328, C344, and C346. Residue D353 is part of the active site. The tract at residues 373 to 402 is disordered; sequence GIRPQRESSRTGRSSVKQEPQRATAGIPRL.

This sequence in the N-terminal section; belongs to the transposase 2 family. The protein in the C-terminal section; belongs to the transposase 35 family.

In terms of biological role, an RNA-guided dsDNA endonuclease. When guided by an RNA derived from the right-end element of its insertion sequence element (IS), cleaves DNA downstream of the transposon-associated motif (TAM). Cleaves supercoiled and linear DNA in a staggered manner 15-21 bases from the TAM yielding 5'-overhangs. Binds reRNA, an approximately 150 nucleotide base sRNA derived from the 3' end of its own gene, the right end (RE) of the insertion sequence (IS) plus sequence downstream of the IS. The chain is Putative RNA-guided DNA endonuclease from Streptomyces pristinaespiralis.